The sequence spans 127 residues: Large ribosomal subunit protein bL20 (127 aa).

The protein belongs to the bacterial ribosomal protein bL20 family.

In terms of biological role, binds directly to 23S ribosomal RNA and is necessary for the in vitro assembly process of the 50S ribosomal subunit. It is not involved in the protein synthesizing functions of that subunit. The polypeptide is Large ribosomal subunit protein bL20 (Opitutus terrae (strain DSM 11246 / JCM 15787 / PB90-1)).